The sequence spans 850 residues: cAMP-inducible prespore protein D7 (850 aa).

The signal sequence occupies residues 1–24 (MYSKKYTSFVIVLILSCIISTCTS). A compositionally biased stretch (low complexity) spans 119–130 (QNNNIGSSIGDS). Disordered stretches follow at residues 119–167 (QNNN…SKTT) and 787–850 (DAEL…QNQK). Positions 131–143 (TGASTSPQFQSIN) are enriched in polar residues. Residues 144–154 (GLSGASQSSGS) show a composition bias toward low complexity. The span at 787 to 798 (DAELAKNNKQEN) shows a compositional bias: basic and acidic residues. The span at 801-820 (ENLVQEKQQSPDQIKNQLKN) shows a compositional bias: polar residues. Positions 837 to 850 (EKNQQLLEQEQNQK) are enriched in low complexity.

The polypeptide is cAMP-inducible prespore protein D7 (D7) (Dictyostelium discoideum (Social amoeba)).